A 511-amino-acid chain; its full sequence is MEKFEGYSEKHKSRQQYFVYPLLFQEYIYAFAPDYGLNGSEPVEIVGCNNKKFSSLLVKRLIIRMYQQNFLDNSVNHPNQDRLLDYKNYFYSEFYSQILSEGFAIVVEIPFSLRELFCPKEKEIPKFQNLRSIHSIFPFFEDKFLHLDYLSHIEIPYPIHLEILVQLLQYRIQDVPSLHLLRFLLNYYSNWNSFITSMKSIFIFKKENKRLFRFLYNSYVSEYEFFLLFLRKQSSCLPLASSGTFLERIHFSRKMEHFGIMYPGFSRKTLWFFMDPLMHYVRYQGKAILASKGTFLLKKKWKCYLINLWQYYFCFWTQPRRIHINQLANSCFDFMGYLSSVPKSSLLVRNQMLENSFLIDTRMKKFDTIVHATLLIGYLSKAQFCTGSGHPISKPIWTDLSDWDILDRFGRICRNLFHYYSGSSKKKTLYRLKYILRLSCARTLGPKHKSTVRAFMQWLGSVFLEEFFREEEQVFSLMFAKTTYFSFRGSHSERIWYLDILRINDLVNPLN.

Belongs to the intron maturase 2 family. MatK subfamily.

Its subcellular location is the plastid. It is found in the chloroplast. Usually encoded in the trnK tRNA gene intron. Probably assists in splicing its own and other chloroplast group II introns. This is Maturase K from Triticum aestivum (Wheat).